We begin with the raw amino-acid sequence, 316 residues long: CD276 antigen (316 aa).

An N-terminal signal peptide occupies residues 1–28 (MLRGWGGPSVGVSMGTALGVLCLCLTGA). Positions 29–139 (VEVQVSEDPV…DSAAVSLQVA (111 aa)) constitute an Ig-like V-type domain. Over 29 to 248 (VEVQVSEDPV…GQPMTFPPEA (220 aa)) the chain is Extracellular. N-linked (GlcNAc...) asparagine glycosylation is found at N104, N189, and N215. Residues 145-238 (PSMTLEPNKD…QDAHGSVTIT (94 aa)) form the Ig-like C2-type domain. A disulfide bridge connects residues C165 and C220. A helical transmembrane segment spans residues 249–269 (LWVTVGLSVCLVILLVALAFV). Topologically, residues 270–316 (CWRKIKQSCEEENAGAEDQDGDGEGSKTALRPLKHSENKEDDGQEIA) are cytoplasmic. The span at 281–292 (ENAGAEDQDGDG) shows a compositional bias: acidic residues. Residues 281 to 316 (ENAGAEDQDGDGEGSKTALRPLKHSENKEDDGQEIA) form a disordered region.

This sequence belongs to the immunoglobulin superfamily. BTN/MOG family. As to quaternary structure, interacts with TREML2 and this interaction enhances T-cell activation.

The protein localises to the membrane. Its function is as follows. Modulates T-cell-mediated immune responses and the development of acute and chronic transplant rejection. May play a positive regulatory role in bone formation and has a dual role in the bone-immune interface. Induces antitumor immunity as it activates both acquired and innate immunity leading to natural killer cell and CD8 T-cell dependent killing of tumor cells. The protein is CD276 antigen (Cd276) of Rattus norvegicus (Rat).